The chain runs to 416 residues: Tryptophan synthase beta chain (416 aa).

Lys109 carries the post-translational modification N6-(pyridoxal phosphate)lysine.

Belongs to the TrpB family. In terms of assembly, tetramer of two alpha and two beta chains. Requires pyridoxal 5'-phosphate as cofactor.

It carries out the reaction (1S,2R)-1-C-(indol-3-yl)glycerol 3-phosphate + L-serine = D-glyceraldehyde 3-phosphate + L-tryptophan + H2O. The protein operates within amino-acid biosynthesis; L-tryptophan biosynthesis; L-tryptophan from chorismate: step 5/5. In terms of biological role, the beta subunit is responsible for the synthesis of L-tryptophan from indole and L-serine. In Prochlorococcus marinus (strain SARG / CCMP1375 / SS120), this protein is Tryptophan synthase beta chain.